The following is a 509-amino-acid chain: Heat shock 70 kDa protein 14 (509 aa).

It belongs to the heat shock protein 70 family. In terms of assembly, component of ribosome-associated complex (RAC), a heterodimer composed of Hsp70/DnaK-type chaperone HSPA14 and Hsp40/DnaJ-type chaperone DNAJC2.

The protein resides in the cytoplasm. It localises to the cytosol. Functionally, component of the ribosome-associated complex (RAC), a complex involved in folding or maintaining nascent polypeptides in a folding-competent state. In the RAC complex, binds to the nascent polypeptide chain, while DNAJC2 stimulates its ATPase activity. The chain is Heat shock 70 kDa protein 14 (HSPA14) from Homo sapiens (Human).